Here is a 140-residue protein sequence, read N- to C-terminus: Protein archease (140 aa).

Ca(2+)-binding residues include Asp-12, Asp-139, and Leu-140.

The protein belongs to the archease family.

Functionally, activates the tRNA-splicing ligase complex by facilitating the enzymatic turnover of catalytic subunit RtcB. Acts by promoting the guanylylation of RtcB, a key intermediate step in tRNA ligation. Can also alter the NTP specificity of RtcB such that ATP, dGTP or ITP is used efficiently. May also act as a chaperone or modulator of proteins involved in DNA or RNA processing. This is Protein archease from Methanothermobacter thermautotrophicus (strain ATCC 29096 / DSM 1053 / JCM 10044 / NBRC 100330 / Delta H) (Methanobacterium thermoautotrophicum).